Reading from the N-terminus, the 840-residue chain is Recyclin-1 (840 aa).

Residues 1-48 (MDDLLKVPEIVTNIASYLSTVDYLSFQQVNKRVYAIINGKNDSKYWSL) form the F-box domain. S409 carries the phosphoserine modification.

In terms of assembly, interacts with SKP1.

It is found in the cytoplasm. It localises to the bud neck. The protein localises to the cell tip. Functionally, involved in recycling plasma membrane proteins internalized by endocytosis. Required for recycling of the v-SNARE SNC1. The chain is Recyclin-1 (RCY1) from Saccharomyces cerevisiae (strain ATCC 204508 / S288c) (Baker's yeast).